The chain runs to 584 residues: Alpha-glucosidase MAL12 (584 aa).

Residue Asp-214 is the Nucleophile of the active site. Glu-276 serves as the catalytic Proton donor.

Belongs to the glycosyl hydrolase 13 family.

It catalyses the reaction Hydrolysis of terminal, non-reducing (1-&gt;4)-linked alpha-D-glucose residues with release of alpha-D-glucose.. This is Alpha-glucosidase MAL12 (MAL12) from Saccharomyces cerevisiae (strain ATCC 204508 / S288c) (Baker's yeast).